The chain runs to 718 residues: Catalase-peroxidase (718 aa).

The segment at 1-24 is disordered; that stretch reads MDQKSDNAGKCPVAHTVPKGRSNR. Positions 95-217 form a cross-link, tryptophyl-tyrosyl-methioninium (Trp-Tyr) (with M-243); it reads WHSAGTYRIT…LAAVQMGLIY (123 aa). His-96 serves as the catalytic Proton acceptor. Residues 217 to 243 constitute a cross-link (tryptophyl-tyrosyl-methioninium (Tyr-Met) (with W-95)); that stretch reads YVNPEGPNGNPDPVAAAREIRETFARM. His-258 contacts heme b.

Belongs to the peroxidase family. Peroxidase/catalase subfamily. In terms of assembly, homodimer or homotetramer. The cofactor is heme b. In terms of processing, formation of the three residue Trp-Tyr-Met cross-link is important for the catalase, but not the peroxidase activity of the enzyme.

It carries out the reaction H2O2 + AH2 = A + 2 H2O. It catalyses the reaction 2 H2O2 = O2 + 2 H2O. Functionally, bifunctional enzyme with both catalase and broad-spectrum peroxidase activity. The sequence is that of Catalase-peroxidase from Sinorhizobium fredii (strain NBRC 101917 / NGR234).